Here is a 619-residue protein sequence, read N- to C-terminus: Translation initiation factor IF-2 (619 aa).

Composition is skewed to low complexity over residues 1 to 18 (MTLN…TTPK) and 98 to 111 (PPQL…LTKT). 2 disordered regions span residues 1 to 24 (MTLN…KETD) and 90 to 113 (SEPQ…KTKP). One can recognise a tr-type G domain in the interval 121-289 (KKSPIVTIMG…ILLVSEIQNL (169 aa)). Positions 130-137 (GHVDHGKT) are G1. GTP is bound at residue 130-137 (GHVDHGKT). The segment at 155-159 (GITQH) is G2. The tract at residues 176–179 (DTPG) is G3. GTP is bound by residues 176-180 (DTPGH) and 230-233 (NKID). The segment at 230–233 (NKID) is G4. Residues 266-268 (SAL) are G5.

It belongs to the TRAFAC class translation factor GTPase superfamily. Classic translation factor GTPase family. IF-2 subfamily.

It localises to the cytoplasm. Its function is as follows. One of the essential components for the initiation of protein synthesis. Protects formylmethionyl-tRNA from spontaneous hydrolysis and promotes its binding to the 30S ribosomal subunits. Also involved in the hydrolysis of GTP during the formation of the 70S ribosomal complex. This chain is Translation initiation factor IF-2, found in Onion yellows phytoplasma (strain OY-M).